The sequence spans 397 residues: tRNA-specific 2-thiouridylase MnmA (397 aa).

ATP contacts are provided by residues 6 to 13 and L32; that span reads AMSGGVDS. Catalysis depends on C101, which acts as the Nucleophile. C101 and C199 form a disulfide bridge. G125 contributes to the ATP binding site. An interaction with tRNA region spans residues 148 to 150; sequence KDQ. Residue C199 is the Cysteine persulfide intermediate of the active site.

The protein belongs to the MnmA/TRMU family.

The protein resides in the cytoplasm. The enzyme catalyses S-sulfanyl-L-cysteinyl-[protein] + uridine(34) in tRNA + AH2 + ATP = 2-thiouridine(34) in tRNA + L-cysteinyl-[protein] + A + AMP + diphosphate + H(+). Catalyzes the 2-thiolation of uridine at the wobble position (U34) of tRNA, leading to the formation of s(2)U34. The protein is tRNA-specific 2-thiouridylase MnmA of Clavibacter sepedonicus (Clavibacter michiganensis subsp. sepedonicus).